Consider the following 210-residue polypeptide: Large ribosomal subunit protein uL4 (210 aa).

A disordered region spans residues 57–78 (VSGGGAKPWKQKGTGRARAGSN).

It belongs to the universal ribosomal protein uL4 family. As to quaternary structure, part of the 50S ribosomal subunit.

In terms of biological role, one of the primary rRNA binding proteins, this protein initially binds near the 5'-end of the 23S rRNA. It is important during the early stages of 50S assembly. It makes multiple contacts with different domains of the 23S rRNA in the assembled 50S subunit and ribosome. Functionally, forms part of the polypeptide exit tunnel. This Desulfovibrio desulfuricans (strain ATCC 27774 / DSM 6949 / MB) protein is Large ribosomal subunit protein uL4.